We begin with the raw amino-acid sequence, 101 residues long: Apolipoprotein C-II (101 aa).

Residues 1 to 22 (MGTRFLLALFLVLLVLGLEVQA) form the signal peptide. Residues 66–74 (AVDERIRDM) are lipid binding. The interval 78-101 (STAAVTTYAGIFTDQLFSMLKGEQ) is lipoprotein lipase cofactor.

The protein belongs to the apolipoprotein C2 family. Post-translationally, proapolipoprotein C-II is synthesized as a sialic acid containing glycoprotein which is subsequently desialylated prior to its proteolytic processing. Proapolipoprotein C-II, the major form found in plasma undergoes proteolytic cleavage of its N-terminal hexapeptide to generate apolipoprotein C-II, which occurs as the minor form in plasma.

The protein resides in the secreted. Component of chylomicrons, very low-density lipoproteins (VLDL), low-density lipoproteins (LDL), and high-density lipoproteins (HDL) in plasma. Plays an important role in lipoprotein metabolism as an activator of lipoprotein lipase. Both proapolipoprotein C-II and apolipoprotein C-II can activate lipoprotein lipase. The protein is Apolipoprotein C-II (APOC2) of Tupaia glis (Common tree shrew).